A 421-amino-acid polypeptide reads, in one-letter code: 3-hydroxy-3-methylglutaryl-coenzyme A reductase (421 aa).

Catalysis depends on charge relay system residues Glu-109, Lys-240, and Asp-315. His-410 acts as the Proton donor in catalysis.

Belongs to the HMG-CoA reductase family.

It carries out the reaction (R)-mevalonate + 2 NADP(+) + CoA = (3S)-3-hydroxy-3-methylglutaryl-CoA + 2 NADPH + 2 H(+). Its pathway is metabolic intermediate biosynthesis; (R)-mevalonate biosynthesis; (R)-mevalonate from acetyl-CoA: step 3/3. In terms of biological role, converts HMG-CoA to mevalonate. This Aeropyrum pernix (strain ATCC 700893 / DSM 11879 / JCM 9820 / NBRC 100138 / K1) protein is 3-hydroxy-3-methylglutaryl-coenzyme A reductase (hmgA).